A 382-amino-acid polypeptide reads, in one-letter code: Intermediate transcription factor 3 large subunit (382 aa).

This sequence belongs to the orthopoxvirus OPG150 family. Heterodimerizes with protein A8 to form the virus intermediate transcription factor (VITF)-3.

In terms of biological role, acts with RNA polymerase to initiate transcription from intermediate gene promoters. The polypeptide is Intermediate transcription factor 3 large subunit (OPG150) (Homo sapiens (Human)).